Consider the following 199-residue polypeptide: Twist-related protein (199 aa).

The tract at residues 1-43 (MQEHQLSRVTSGNKKKYQSFDDESRDEKRMKCDSTDKLESNSN) is disordered. The segment covering 25-39 (RDEKRMKCDSTDKLE) has biased composition (basic and acidic residues). The region spanning 51–102 (THRVIANIRERQRTQALNQSFSTLRKIIPTLPSDKLSKIQTLRLAAMYIDFL) is the bHLH domain.

In terms of assembly, efficient DNA binding requires dimerization with another bHLH protein. Homodimer. Expression is seen at the point of medusa formation in the ectodermal and endodermal bud tissues, and in the entocodon which gives rise to all smooth and striated muscle cells. After the subumbrellar plate differentiates from the endoderm, strong expression is detected until the medusa detaches from the gonzoid. Expression is observed in the distal part of the medusa but diminishes in entocodon-derived muscles as the tissues differentiate, with expression disappearing completely after stage 8. In later stages expression is seen in the distal and proximal parts of the bud and depending on state of maturity, in the developing gonadal tissue.

The protein resides in the nucleus. Its function is as follows. Probable transcription factor, which may be responsible for the formation of myoepithelial cells in early muscle development in larva and the formation of non-muscle tissues in later bud stages and mesoderm-like structures in the medusa. This chain is Twist-related protein, found in Podocoryna carnea (Hydrozoan).